Here is a 492-residue protein sequence, read N- to C-terminus: MDPYKYRPASSYNSPFFTTNSGAPVWNNNSSMTVGPRGPILLEDYHLVEKLANFDRERIPERVVHARGASAKGFFEVTHDISNLTCADFLRAPGVQTPVIVRFSTVIHERGSPETLRDPRGFAVKFYTREGNFDLVGNNFPVFFIRDGMKFPDMVHALKPNPKSHIQENWRILDFFSHHPESLNMFTFLFDDIGIPQDYRHMDGSGVNTYMLINKAGKAHYVKFHWKPTCGVKSLLEEDAIRVGGTNHSHATQDLYDSIAAGNYPEWKLFIQIIDPADEDKFDFDPLDVTKTWPEDILPLQPVGRMVLNKNIDNFFAENEQLAFCPAIIVPGIHYSDDKLLQTRVFSYADTQRHRLGPNYLQLPVNAPKCAHHNNHHEGFMNFMHRDEEVNYFPSRYDQVRHAEKYPTPPAVCSGKRERCIIEKENNFKEPGERYRTFTPERQERFIQRWIDALSDPRITHEIRSIWISYWSQADKSLGQKLASRLNVRPSI.

Active-site residues include His-65 and Asn-138. Residue Tyr-348 coordinates heme.

The protein belongs to the catalase family. In terms of assembly, homotetramer and heterotetramer. At least six or seven isozymes are produced from a mixture of 3 gene products. Interacts with NCA1. Interacts with LSD1. Heme serves as cofactor.

The protein localises to the cytoplasm. It localises to the cytosol. The protein resides in the peroxisome matrix. The catalysed reaction is 2 H2O2 = O2 + 2 H2O. Functionally, catalyzes the degradation of hydrogen peroxide (H(2)O(2)) generated by peroxisomal oxidases to water and oxygen, thereby protecting cells from the toxic effects of hydrogen peroxide. The polypeptide is Catalase-2 (CAT2) (Arabidopsis thaliana (Mouse-ear cress)).